A 350-amino-acid chain; its full sequence is Protein RecA (350 aa).

68–75 serves as a coordination point for ATP; sequence GPESSGKT.

The protein belongs to the RecA family.

The protein resides in the cytoplasm. In terms of biological role, can catalyze the hydrolysis of ATP in the presence of single-stranded DNA, the ATP-dependent uptake of single-stranded DNA by duplex DNA, and the ATP-dependent hybridization of homologous single-stranded DNAs. It interacts with LexA causing its activation and leading to its autocatalytic cleavage. This is Protein RecA from Mycolicibacterium gilvum (strain PYR-GCK) (Mycobacterium gilvum (strain PYR-GCK)).